The sequence spans 201 residues: Probable nicotinate-nucleotide adenylyltransferase (201 aa).

It belongs to the NadD family.

It catalyses the reaction nicotinate beta-D-ribonucleotide + ATP + H(+) = deamido-NAD(+) + diphosphate. It functions in the pathway cofactor biosynthesis; NAD(+) biosynthesis; deamido-NAD(+) from nicotinate D-ribonucleotide: step 1/1. In terms of biological role, catalyzes the reversible adenylation of nicotinate mononucleotide (NaMN) to nicotinic acid adenine dinucleotide (NaAD). The sequence is that of Probable nicotinate-nucleotide adenylyltransferase from Clostridium botulinum (strain Kyoto / Type A2).